The primary structure comprises 374 residues: MATDTAVTGAPETMQLRLASGNGPVTRTVLRTPLRDALPSEVPLIDISPIFSTSVADRKAVACKIHDAATNIGFFYIQNHRVPSRDTDMAYSASLDFFRQDMEAKMKADAKKGPFDSGYRGPGTQRVNPDEGADLRETYSILYDPMLDPTVPDPARIPEPASRFLHLGRAPFESTDTLPHFKDAFVRYFQACLALARALTRTFALSLDLPESAFDSKVQYPDASLEINFYPPISTGHAVSAPADPDTRVSIGSHTDFLLFTILWQDSNGGLQVLNREGQWIRASPVEGTFVVNIGDYLQRITNDKYVSTVHRAQNWSGRQRVSMPFFWGFGMHESCQVLESCCGEDGKSKYDEVRCVDWVSRRLGNLFDLSDKG.

Residues 111–131 (KKGPFDSGYRGPGTQRVNPDE) are disordered. A Fe2OG dioxygenase domain is found at 220 to 330 (YPDASLEINF…RVSMPFFWGF (111 aa)). Fe cation contacts are provided by histidine 254, aspartate 256, and histidine 311. 2-oxoglutarate is bound at residue arginine 321.

Belongs to the iron/ascorbate-dependent oxidoreductase family. Fe(2+) serves as cofactor.

The catalysed reaction is peramine + 2-oxoglutarate + O2 = 8-hydroxyperamine + succinate + CO2. The protein operates within secondary metabolite biosynthesis. In terms of biological role, 2-oxoglutarate-Fe(II) type oxidoreductase; part of the gene cluster that mediates the biosynthesis of pyrrolopyrazines, secondary metabolites showing insecticidal activity. Within the pathway, ppzC uses peramine as substrate for hydroxylation to yield the novel analog 8-hydroxyperamine. The single multifunctional NRPS ppzA is sufficient to produce peramine via condensation of 1-pyrroline-5-carboxylate and arginine, N-methylation of the alpha-amino group of arginine and reduction of the thioester and the cyclization to form an iminium ion resulting in release from the peptide synthetase. Deprotonation of this intermediate and oxidation of the pyrroline ring would give rise to peramine. In Epichloe species that produce only peramine, the peramine synthetase gene is not localized in a gene cluster, in contrast to Metarhizium species that contain additional pyrrolopyrazine biosynthesis genes. The 2-oxoglutarate-Fe(II) type oxidoreductase ppzC hydroxylates peramine to yield the newly identified compound 8-hydroxyperamine whereas ppzD converts L-proline into trans-4-hydroxy-L-proline, a precursor of peramine biosynthesis. The polypeptide is 2-oxoglutarate-Fe(II) type oxidoreductase ppzC (ppzC) (Metarhizium majus (strain ARSEF 297)).